A 62-amino-acid chain; its full sequence is Large ribosomal subunit protein bL28 (62 aa).

Belongs to the bacterial ribosomal protein bL28 family.

The chain is Large ribosomal subunit protein bL28 from Phytoplasma mali (strain AT).